Consider the following 354-residue polypeptide: UDP-N-acetylglucosamine--N-acetylmuramyl-(pentapeptide) pyrophosphoryl-undecaprenol N-acetylglucosamine transferase (354 aa).

Residues 15-17, N127, R163, S191, I244, 263-268, and Q288 contribute to the UDP-N-acetyl-alpha-D-glucosamine site; these read TGG and ALTVSE.

The protein belongs to the glycosyltransferase 28 family. MurG subfamily.

It is found in the cell inner membrane. The enzyme catalyses di-trans,octa-cis-undecaprenyl diphospho-N-acetyl-alpha-D-muramoyl-L-alanyl-D-glutamyl-meso-2,6-diaminopimeloyl-D-alanyl-D-alanine + UDP-N-acetyl-alpha-D-glucosamine = di-trans,octa-cis-undecaprenyl diphospho-[N-acetyl-alpha-D-glucosaminyl-(1-&gt;4)]-N-acetyl-alpha-D-muramoyl-L-alanyl-D-glutamyl-meso-2,6-diaminopimeloyl-D-alanyl-D-alanine + UDP + H(+). Its pathway is cell wall biogenesis; peptidoglycan biosynthesis. Cell wall formation. Catalyzes the transfer of a GlcNAc subunit on undecaprenyl-pyrophosphoryl-MurNAc-pentapeptide (lipid intermediate I) to form undecaprenyl-pyrophosphoryl-MurNAc-(pentapeptide)GlcNAc (lipid intermediate II). The protein is UDP-N-acetylglucosamine--N-acetylmuramyl-(pentapeptide) pyrophosphoryl-undecaprenol N-acetylglucosamine transferase of Vibrio cholerae serotype O1 (strain ATCC 39541 / Classical Ogawa 395 / O395).